Reading from the N-terminus, the 1365-residue chain is DNA-directed RNA polymerase subunit beta'' (1365 aa).

Zn(2+)-binding residues include cysteine 224, cysteine 295, cysteine 302, and cysteine 305.

It belongs to the RNA polymerase beta' chain family. RpoC2 subfamily. In plastids the minimal PEP RNA polymerase catalytic core is composed of four subunits: alpha, beta, beta', and beta''. When a (nuclear-encoded) sigma factor is associated with the core the holoenzyme is formed, which can initiate transcription. The cofactor is Zn(2+).

It localises to the plastid. It is found in the chloroplast. The enzyme catalyses RNA(n) + a ribonucleoside 5'-triphosphate = RNA(n+1) + diphosphate. In terms of biological role, DNA-dependent RNA polymerase catalyzes the transcription of DNA into RNA using the four ribonucleoside triphosphates as substrates. This is DNA-directed RNA polymerase subunit beta'' from Fagopyrum esculentum subsp. ancestrale (Wild buckwheat).